The sequence spans 835 residues: Pre-mRNA-processing protein 40C (835 aa).

The span at 1 to 20 (MEGENTTDPPYTTAASSGQS) shows a compositional bias: polar residues. The disordered stretch occupies residues 1 to 22 (MEGENTTDPPYTTAASSGQSIF). WW domains follow at residues 243–276 (GNRL…KPPG) and 295–328 (SLPG…IPAE). A disordered region spans residues 397–459 (SGMPVSSTIT…DSGPSKEECS (63 aa)). Residues 400 to 428 (PVSSTITSEANSGKTTEVTPSGESGNSTG) show a composition bias toward polar residues. 3 consecutive FF domains span residues 455 to 509 (KEEC…YVKT), 519 to 577 (RAAH…RVLS), and 590 to 643 (RAAA…YIAE). 2 disordered regions span residues 649–677 (RGDD…RKER) and 714–738 (TESK…PADK). 2 FF domains span residues 691-748 (RKEA…HVKS) and 750-815 (YERC…YVED).

The protein belongs to the PRPF40 family. In terms of assembly, interacts (via the WW domains) with the phosphorylated C-terminal domain of NRPB1 (via CTD domain). As to expression, expressed in roots, shoots, rosette leaves, cauline leaves, stems and flowers.

The protein localises to the nucleus. Its function is as follows. Binds the phosphorylated C-terminal domain (CTD) of the largest subunit of RNA polymerase II and functions as a scaffold for RNA processing machineries. May be involved in pre-mRNA splicing. This chain is Pre-mRNA-processing protein 40C, found in Arabidopsis thaliana (Mouse-ear cress).